Here is a 180-residue protein sequence, read N- to C-terminus: Ribosome rescue factor SmrB (180 aa).

The 76-residue stretch at 98 to 173 (LDLHGLTQLI…GDAALLLLVE (76 aa)) folds into the Smr domain.

The protein belongs to the SmrB family. Associates with collided ribosomes, but not with correctly translating polysomes.

Its function is as follows. Acts as a ribosome collision sensor. Detects stalled/collided disomes (pairs of ribosomes where the leading ribosome is stalled and a second ribosome has collided with it) and endonucleolytically cleaves mRNA at the 5' boundary of the stalled ribosome. Stalled/collided disomes form a new interface (primarily via the 30S subunits) that binds SmrB. Cleaved mRNA becomes available for tmRNA ligation, leading to ribosomal subunit dissociation and rescue of stalled ribosomes. The chain is Ribosome rescue factor SmrB from Proteus mirabilis (strain HI4320).